The sequence spans 152 residues: Heavy metal-associated isoprenylated plant protein 20 (152 aa).

The HMA domain maps to 27–90 (MQTVNIKVKM…RIERTGKKAE (64 aa)). 2 residues coordinate Cd(2+): Cys-38 and Cys-41. Cys-149 carries the post-translational modification Cysteine methyl ester. Cys-149 carries the S-farnesyl cysteine lipid modification. Residues 150 to 152 (TVM) constitute a propeptide, removed in mature form.

It belongs to the HIPP family. Interacts with ZHD11/HB29. As to expression, expressed in roots, shoot apical meristem, leaves and flowers.

Its subcellular location is the membrane. Functionally, heavy-metal-binding protein. Binds cadmium. May be involved in cadmium transport and play a role in cadmium detoxification. The protein is Heavy metal-associated isoprenylated plant protein 20 of Arabidopsis thaliana (Mouse-ear cress).